The chain runs to 410 residues: Arginine deiminase (410 aa).

C400 functions as the Amidino-cysteine intermediate in the catalytic mechanism.

Belongs to the arginine deiminase family.

It localises to the cytoplasm. It carries out the reaction L-arginine + H2O = L-citrulline + NH4(+). The protein operates within amino-acid degradation; L-arginine degradation via ADI pathway; carbamoyl phosphate from L-arginine: step 1/2. The chain is Arginine deiminase from Bacillus cytotoxicus (strain DSM 22905 / CIP 110041 / 391-98 / NVH 391-98).